A 1571-amino-acid chain; its full sequence is Disco-interacting protein 2 homolog A (1571 aa).

The 119-residue stretch at 9–127 folds into the DMAP1-binding domain; that stretch reads EAAPLPAEVR…KRRSVLVHSS (119 aa). Residues 60-203 are disordered; that stretch reads LQAENRIPGP…APSAAATPGA (144 aa). Over residues 86 to 98 the composition is skewed to basic and acidic residues; sequence ASRDERFRSDVHT. Serine 94 is subject to Phosphoserine. Composition is skewed to polar residues over residues 127–139 and 152–162; these read SVETYTPPDTSSA and LTSTPLQSHSS. Threonine 132 and threonine 155 each carry phosphothreonine. The span at 174 to 203 shows a compositional bias: low complexity; the sequence is SSTSSSASSTSSHPGGRPTTAPSAAATPGA. 2 short sequence motifs (PXXP motif; required for interaction with CTTN) span residues 283 to 286 and 307 to 310; these read PKRP and PNQP. Residues 302-327 are disordered; it reads VQQPDPNQPKPEGSETSVLRGEPLTA.

This sequence belongs to the DIP2 family. Interacts with FSTL1; DIP2A may act as a cell surface receptor for FSTL1. Interacts (via N-terminus) with CTTN (via SH3 domain); the interaction promotes acetylation of CTTN and is required for proper synaptic transmission. Interacts with SHANK3. In terms of tissue distribution, low expression in all tissues tested.

The protein localises to the cell membrane. It localises to the mitochondrion. Its subcellular location is the cell projection. It is found in the dendritic spine. It carries out the reaction acetate + ATP + CoA = acetyl-CoA + AMP + diphosphate. Catalyzes the de novo synthesis of acetyl-CoA in vitro. Promotes acetylation of CTTN, possibly by providing the acetyl donor, ensuring correct dendritic spine morphology and synaptic transmission. Binds to follistatin-related protein FSTL1 and may act as a cell surface receptor for FSTL1, contributing to AKT activation and subsequent FSTL1-induced survival and function of endothelial cells and cardiac myocytes. The protein is Disco-interacting protein 2 homolog A (DIP2A) of Homo sapiens (Human).